The chain runs to 1204 residues: MDSLAEEFFVSGNPDVEEQTKEETEIIAEKPVTQLDKQKMDISADPEPVNALLEIKKVLNPISALPKGVFPNIEKFIQEDFSFQTMQREVTTHSQTGEEIVPALTLHFLITQLEMALRNIQASNYTAQQINVGYYLTLLFLYGVALTERAKKEDCIEAENKFLVMKMVIQESEICENFMCLVYFGRGLLRCAQKRYNGALLEFYKSLQEIGDTDDNWFEVDPTDDEDLPTTFKDSLNNFIKTTESNIMKETICSYLDCERSCEADILKNTNYKGFFQLMCSKSCCIYFHKICWKKFKNLKYPGESDQSFSGQKCLKEGCPGDMVRMLQCDVPGIVKILFEVVRKDEYITIENLGASYKNLMSLELTDTDIRPKFNLKPNTKDEVPIFKLDYNYFYHLLHIIIISGTDMVRQIFDEAMPPTLLKKELLIHKNVLEPYYNHLWTNHPLGGSWHLLYPPNKELPQSKQFDLCLLLALIKHLNVFPAPRKGWDMEPPSSDLSKSADILRLCKYRDILLSEILMNGLTELQFNSIWKKVSDILLRLGMKQDDLDKVKENPIENISLDYHQLSIYLGIPVPEIIQRMLSCYQQGITLQSITGSQRLDVEEFQNDEEDLSPPVMEYNIDVKSNTEIQLAEINKDVASIPSESSTESVKDLQEVKSKTKKKKRTKSNKKDKDSEDEQVSYMVEKDDQLETEQVDVNTLSTYMKTDTSDAQEDSAAEDKFCSLDELHILDMVEQGSSGKESTDFKETEKERLAHQHQLYKLQYECEDYKRQLKTVTFRWQENQMLIKKKEKIIVSLNQQVAFGINKMSKLQRQIHAKDDEIKNLKDQLSLKRSQWEMEKHNLESTVKTYLNKLNAETSRALTAEVYFLQCRRDFGLLHLEQTEKECLNQLARVTHMAASNLESLQLKAAVDSWNAIVADVRNKIAFLRTQYNEQINKVKQGFALSTLPPVQLPPPPPSPEILIQQFLGRPLVKESFFRPILTVPQMPAVCPGVISAAVQPRPPLMPGITWAMPTPIGDTVSPSASLCSEPLMINWERITDRLKTAFPQQTRKELTDFLQQLKDSHGKSVSRLTFDEIVYKISQMIEPKKSESEEKSAQDGNNASPSHTASQPNAPQDPKSAQGSATWEGDKDMDNEEEEEEPCVICHENLSPENLSVLPCAHKFHSQCIRPWLMQQGTCPTCRLHVLQPEEFPGHPNGQLPKI.

Disordered regions lie at residues 1–22 and 640–681; these read MDSL…QTKE and SIPS…EQVS. Over residues 649 to 658 the composition is skewed to basic and acidic residues; sequence SVKDLQEVKS. A compositionally biased stretch (basic residues) spans 659 to 668; sequence KTKKKKRTKS. 2 coiled-coil regions span residues 746 to 861 and 906 to 941; these read KETE…TSRA and QLKA…KVKQ. The segment covering 1088–1098 has biased composition (basic and acidic residues); sequence PKKSESEEKSA. The interval 1088–1141 is disordered; sequence PKKSESEEKSAQDGNNASPSHTASQPNAPQDPKSAQGSATWEGDKDMDNEEEEE. Polar residues predominate over residues 1099-1126; that stretch reads QDGNNASPSHTASQPNAPQDPKSAQGSA. Residues 1132-1141 are compositionally biased toward acidic residues; the sequence is KDMDNEEEEE. An RING-type; atypical zinc finger spans residues 1144-1184; it reads CVICHENLSPENLSVLPCAHKFHSQCIRPWLMQQGTCPTCR.

In terms of assembly, probably interacts with DAZL.

The protein localises to the cytoplasm. The catalysed reaction is S-ubiquitinyl-[E2 ubiquitin-conjugating enzyme]-L-cysteine + [acceptor protein]-L-lysine = [E2 ubiquitin-conjugating enzyme]-L-cysteine + N(6)-ubiquitinyl-[acceptor protein]-L-lysine.. Its pathway is protein modification; protein ubiquitination. In terms of biological role, E3 Ubiquitin ligase proteins mediate ubiquitination and subsequent proteasomal degradation of target proteins. E3 ubiquitin ligases accept ubiquitin from an E2 ubiquitin-conjugating enzyme in the form of a thioester and then directly transfers the ubiquitin to targeted substrates. Able to specifically bind RNA. The polypeptide is E3 ubiquitin-protein ligase DZIP3 (Dzip3) (Mus musculus (Mouse)).